A 147-amino-acid chain; its full sequence is Angiogenin (147 aa).

The N-terminal stretch at 1-24 (MVILLGPLLLVFMLGLGLAPLSLA) is a signal peptide. Residue H37 is the Proton acceptor of the active site. 2 residues coordinate tRNA: R45 and D46. 3 disulfides stabilise this stretch: C50/C104, C63/C115, and C81/C130. A Nucleolar localization signal motif is present at residues 55-59 (KQRGL). C104 and I126 together coordinate tRNA. Residue H137 is the Proton donor of the active site.

Belongs to the pancreatic ribonuclease family. Homodimer. Interacts with RNH1; inhibiting ANG ribonuclease activity. Interacts with PCNA.

The protein localises to the secreted. Its subcellular location is the nucleus. It is found in the nucleolus. The protein resides in the cytoplasm. It localises to the stress granule. Has weak tRNA ribonuclease activity by itself due to partial autoinhibition by its C-terminus, which folds into a short alpha-helix that partially occludes the substrate-binding site. In absence of stress, the ribonuclease activity is inhibited by RNH1 in the cytoplasm. In response to stress, dissociates from RNH1 in the cytoplasm and associates with cytoplasmic ribosomes with vacant A-sites: ribosomes directly activate the tRNA ribonuclease activity of ANG by refolding the C-terminal alpha-helix. In response to stress, the angiogenic activity of ANG is inhibited by RNH1 in the nucleus. Functionally, secreted ribonuclease that can either promote or restrict cell proliferation of target cells, depending on the context. Endocytosed in target cells via its receptor PLXNB2 and translocates to the cytoplasm or nucleus. Under stress conditions, localizes to the cytoplasm and promotes the assembly of stress granules (SGs): specifically cleaves a subset of tRNAs within anticodon loops to produce tRNA-derived stress-induced fragments (tiRNAs), resulting in translation repression and inhibition of cell proliferation. tiRNas also prevent formation of apoptosome, thereby promoting cell survival. Preferentially cleaves RNAs between a pyrimidine and an adenosine residue, suggesting that it cleaves the anticodon loop of tRNA(Ala) (32-UUAGCAU-38) after positions 33 and 36. Cleaves a subset of tRNAs, including tRNA(Ala), tRNA(Glu), tRNA(Gly), tRNA(Lys), tRNA(Val), tRNA(His), tRNA(Asp) and tRNA(Sec). Under growth conditions and in differentiated cells, translocates to the nucleus and stimulates ribosomal RNA (rRNA) transcription, including that containing the initiation site sequences of 45S rRNA, thereby promoting cell growth and proliferation. Angiogenin induces vascularization of normal and malignant tissues via its ability to promote rRNA transcription. Involved in hematopoietic stem and progenitor cell (HSPC) growth and survival by promoting rRNA transcription in growth conditions and inhibiting translation in response to stress, respectively. Mediates the crosstalk between myeloid and intestinal epithelial cells to protect the intestinal epithelial barrier integrity: secreted by myeloid cells and promotes intestinal epithelial cells proliferation and survival. Also mediates osteoclast-endothelial cell crosstalk in growing bone: produced by osteoclasts and protects the neighboring vascular cells against senescence by promoting rRNA transcription. The protein is Angiogenin (ANG) of Sus scrofa (Pig).